Consider the following 118-residue polypeptide: MGIKYSSKINKIRTFALSLIFVGFIVMYIGIFFRTSPFVMTLFMILGLLFIIASTVVYFWIGTLSTRAVKVVCPSCGKITKMLGKVDLCMFCNEPLTLDPELEGKEFDEKYNRKKRKS.

Helical transmembrane passes span 12–32 (IRTFALSLIFVGFIVMYIGIF) and 42–62 (LFMILGLLFIIASTVVYFWIG).

Belongs to the UPF0295 family.

Its subcellular location is the cell membrane. This is UPF0295 protein GWCH70_0499 from Geobacillus sp. (strain WCH70).